The sequence spans 379 residues: Chaperone protein DnaJ (379 aa).

The region spanning 5–70 (DYYEVLGVGK…EKKAAYDQYG (66 aa)) is the J domain. The CR-type zinc finger occupies 139 to 217 (GHEAQIRVPH…CHGQGKLKSQ (79 aa)). Residues Cys-152, Cys-155, Cys-169, Cys-172, Cys-191, Cys-194, Cys-205, and Cys-208 each contribute to the Zn(2+) site. CXXCXGXG motif repeat units lie at residues 152 to 159 (CEHCHGNG), 169 to 176 (CPTCNGVG), 191 to 198 (CPKCHGSG), and 205 to 212 (CTKCHGQG).

Belongs to the DnaJ family. In terms of assembly, homodimer. Zn(2+) serves as cofactor.

Its subcellular location is the cytoplasm. Functionally, participates actively in the response to hyperosmotic and heat shock by preventing the aggregation of stress-denatured proteins and by disaggregating proteins, also in an autonomous, DnaK-independent fashion. Unfolded proteins bind initially to DnaJ; upon interaction with the DnaJ-bound protein, DnaK hydrolyzes its bound ATP, resulting in the formation of a stable complex. GrpE releases ADP from DnaK; ATP binding to DnaK triggers the release of the substrate protein, thus completing the reaction cycle. Several rounds of ATP-dependent interactions between DnaJ, DnaK and GrpE are required for fully efficient folding. Also involved, together with DnaK and GrpE, in the DNA replication of plasmids through activation of initiation proteins. This is Chaperone protein DnaJ from Cupriavidus metallidurans (strain ATCC 43123 / DSM 2839 / NBRC 102507 / CH34) (Ralstonia metallidurans).